The primary structure comprises 302 residues: Large ribosomal subunit protein uL29m (302 aa).

The transit peptide at 1-38 (MASSGAARPAASRVLQRCQPFSSSTSCAAPVTTWRTLA) directs the protein to the mitochondrion. Residues 255–302 (EPVADHLETPETSGQEKVGELSPAGAVDPSTILASKTGKPVTDAPRSS) are disordered.

Belongs to the universal ribosomal protein uL29 family. As to quaternary structure, component of the mitochondrial large ribosomal subunit. Mature mitochondrial ribosomes consist of a small (37S) and a large (54S) subunit. The 37S subunit contains at least 33 different proteins and 1 molecule of RNA (15S). The 54S subunit contains at least 45 different proteins and 1 molecule of RNA (21S).

Its subcellular location is the mitochondrion. The chain is Large ribosomal subunit protein uL29m (MRPL4) from Pyricularia oryzae (strain 70-15 / ATCC MYA-4617 / FGSC 8958) (Rice blast fungus).